The chain runs to 152 residues: Nucleoside diphosphate kinase (152 aa).

Lys11, Phe59, Arg87, Thr93, Arg104, and Asn114 together coordinate ATP. The Pros-phosphohistidine intermediate role is filled by His117.

It belongs to the NDK family. As to quaternary structure, homotetramer. Requires Mg(2+) as cofactor.

The protein localises to the cytoplasm. The catalysed reaction is a 2'-deoxyribonucleoside 5'-diphosphate + ATP = a 2'-deoxyribonucleoside 5'-triphosphate + ADP. It carries out the reaction a ribonucleoside 5'-diphosphate + ATP = a ribonucleoside 5'-triphosphate + ADP. Major role in the synthesis of nucleoside triphosphates other than ATP. The ATP gamma phosphate is transferred to the NDP beta phosphate via a ping-pong mechanism, using a phosphorylated active-site intermediate. The polypeptide is Nucleoside diphosphate kinase (Prochlorococcus marinus (strain MIT 9215)).